A 200-amino-acid polypeptide reads, in one-letter code: MYNLTSRQEQVLQLIKQYTEETGYPPTRAEIARILGFKSANAAEEHIKALARKGAIEIMPGASRGIRLTESQSGIPIVGRVAAGNPILAQEHIEDYCNIPNSFFSPSADYFLRVHGMSMKDAGILDGDLLAVHRTDQVRNGQIVVARIGEEVTVKRFKRQGNQAQVELWPENPDFKVIHVDMRDQEFSIEGLSVGVIRRD.

The H-T-H motif DNA-binding region spans 28–48 (RAEIARILGFKSANAAEEHIK). Residues Ser-118 and Lys-155 each act as for autocatalytic cleavage activity in the active site.

The protein belongs to the peptidase S24 family. In terms of assembly, homodimer.

The catalysed reaction is Hydrolysis of Ala-|-Gly bond in repressor LexA.. Its function is as follows. Represses a number of genes involved in the response to DNA damage (SOS response), including recA and lexA. In the presence of single-stranded DNA, RecA interacts with LexA causing an autocatalytic cleavage which disrupts the DNA-binding part of LexA, leading to derepression of the SOS regulon and eventually DNA repair. In Cellvibrio japonicus (strain Ueda107) (Pseudomonas fluorescens subsp. cellulosa), this protein is LexA repressor.